Consider the following 84-residue polypeptide: Beta-defensin 119 (84 aa).

A signal peptide spans 1–21 (MKFLFLFLAILLATKIPVISG). Intrachain disulfides connect C28/C55, C35/C49, and C39/C56.

The protein belongs to the beta-defensin family.

The protein localises to the secreted. Its function is as follows. Has antibacterial activity. In Macaca fascicularis (Crab-eating macaque), this protein is Beta-defensin 119 (DEFB119).